An 852-amino-acid chain; its full sequence is Bifunctional isopimaradiene synthase, chloroplastic (852 aa).

The transit peptide at 1-53 (HHLTANTQSIPHFSTTLNAGSSARKRRSLYLRWGKGSNKIIACVGEGATSVPY) directs the protein to the chloroplast. Residue Lys-252 coordinates substrate. 2 residues coordinate Mg(2+): Asp-385 and Asp-387. The DXDD motif signature appears at 385-388 (DIDD). Substrate is bound at residue Lys-472. Residues Asp-604, Asp-608, Asn-748, Thr-752, and Glu-756 each contribute to the Mg(2+) site. The DDXXD motif motif lies at 604 to 608 (DDLYD).

It belongs to the terpene synthase family. Tpsd subfamily. The cofactor is Mg(2+).

It is found in the plastid. It localises to the chloroplast. The catalysed reaction is (2E,6E,10E)-geranylgeranyl diphosphate = (+)-copalyl diphosphate. The enzyme catalyses (+)-copalyl diphosphate = isopimara-7,15-diene + diphosphate. It participates in terpene metabolism; oleoresin biosynthesis. In terms of biological role, involved in defensive oleoresin formation in conifers in response to insect attack or other injury. Involved in diterpene (C20) olefins biosynthesis. Bifunctional enzyme that catalyzes two sequential cyclizations of geranylgeranyl diphosphate (GGPP) to isopimara-7,15-diene. The protein is Bifunctional isopimaradiene synthase, chloroplastic (TPS-ISO) of Abies balsamea (Balsam fir).